The sequence spans 232 residues: Ion-translocating oxidoreductase complex subunit E (232 aa).

Helical transmembrane passes span 18–38 (GLVQ…LTNA), 39–59 (LGLG…VSLV), 69–89 (IPVF…LINA), 93–113 (GLYL…IIIG), 127–147 (AAFD…VLGA), and 182–202 (PFLL…LIAL).

It belongs to the NqrDE/RnfAE family. In terms of assembly, the complex is composed of six subunits: RnfA, RnfB, RnfC, RnfD, RnfE and RnfG.

It localises to the cell inner membrane. Functionally, part of a membrane-bound complex that couples electron transfer with translocation of ions across the membrane. The polypeptide is Ion-translocating oxidoreductase complex subunit E (Shewanella sp. (strain ANA-3)).